The sequence spans 165 residues: Nucleotide-binding protein SYNW1816 (165 aa).

The protein belongs to the YajQ family.

Its function is as follows. Nucleotide-binding protein. The chain is Nucleotide-binding protein SYNW1816 from Parasynechococcus marenigrum (strain WH8102).